The primary structure comprises 178 residues: Probetacellulin (178 aa).

The signal sequence occupies residues 1 to 31 (MARAAPGSGASPLPLLPALALGLVILHCVVA). The Extracellular portion of the chain corresponds to 32-118 (DGNSTRSPED…LFYLRGDRGQ (87 aa)). N34 is a glycosylation site (N-linked (GlcNAc...) asparagine). Residues 65–105 (HFSRCPKQYKHYCIKGRCRFVVAEQTPSCVCDEGYAGARCE) enclose the EGF-like domain. 3 disulfide bridges follow: C69-C82, C77-C93, and C95-C104. Residues 112 to 178 (LRGDRGQILV…NDDIQETSIA (67 aa)) constitute a propeptide, removed in mature form. Residues 119–139 (ILVICLIAVMVIFIILVVSIC) form a helical membrane-spanning segment. The Cytoplasmic portion of the chain corresponds to 140-178 (TCCHPLRKRRKRRKKEEEMETLGKDITPINDDIQETSIA).

Monomer. Interacts with EGFR and ERBB4. As to expression, expressed in a wide range of tissues, including the mammary gland.

The protein resides in the secreted. The protein localises to the extracellular space. Its subcellular location is the cell membrane. Growth factor that binds to EGFR, ERBB4 and other EGF receptor family members. Potent mitogen for retinal pigment epithelial cells and vascular smooth muscle cells. The sequence is that of Probetacellulin (BTC) from Bos taurus (Bovine).